A 41-amino-acid polypeptide reads, in one-letter code: Large ribosomal subunit protein bL36 (41 aa).

The protein belongs to the bacterial ribosomal protein bL36 family.

The polypeptide is Large ribosomal subunit protein bL36 (Phenylobacterium zucineum (strain HLK1)).